Consider the following 1473-residue polypeptide: G8 domain-containing protein DDB_G0286311 (1473 aa).

Residues 1–21 form the signal peptide; that stretch reads MKRFFIVILFILLVCIFNVKS. Residues 105-125 traverse the membrane as a helical segment; that stretch reads IVLMIATITGSLLFIRFNIGF. Residue Asn-126 is glycosylated (N-linked (GlcNAc...) asparagine). The helical transmembrane segment at 130-150 threads the bilayer; it reads TLIILIIGTIFLIGSSHSITL. Residues Asn-203, Asn-241, and Asn-275 are each glycosylated (N-linked (GlcNAc...) asparagine). Positions 298 to 375 are enriched in low complexity; that stretch reads TGTTPTTTPT…PTTTPTTTPT (78 aa). Residues 298 to 400 are disordered; sequence TGTTPTTTPT…SSSPSSPSFS (103 aa). A compositionally biased stretch (polar residues) spans 376–389; sequence DSCPTTSTWRPTMA. Low complexity predominate over residues 390–400; it reads SSSSPSSPSFS. Asn-444, Asn-637, Asn-680, Asn-1078, Asn-1088, Asn-1176, Asn-1206, Asn-1225, Asn-1389, and Asn-1424 each carry an N-linked (GlcNAc...) asparagine glycan. The 129-residue stretch at 626-754 folds into the G8 domain; the sequence is SIWSSGIVPL…YHNTWSKLST (129 aa).

It belongs to the comF family.

The protein resides in the membrane. This chain is G8 domain-containing protein DDB_G0286311, found in Dictyostelium discoideum (Social amoeba).